The sequence spans 369 residues: Iron-sulfur cluster carrier protein (369 aa).

An ATP-binding site is contributed by 115–122 (GKGGVGKS).

Belongs to the Mrp/NBP35 ATP-binding proteins family. As to quaternary structure, homodimer. Holo-ApbC forms a mixture of homodimers and homotetramers.

Functionally, binds and transfers iron-sulfur (Fe-S) clusters to target apoproteins. Can hydrolyze ATP. Both activities are required for function in vivo, but the ability to hydrolyze ATP is not necessary for Fe-S cluster transfer. The polypeptide is Iron-sulfur cluster carrier protein (Salmonella typhimurium (strain LT2 / SGSC1412 / ATCC 700720)).